The chain runs to 200 residues: Probable molybdenum cofactor guanylyltransferase (200 aa).

Residues 9–11 (LAG), K21, D69, and D100 each bind GTP. Mg(2+) is bound at residue D100.

The protein belongs to the MobA family. Mg(2+) serves as cofactor.

It localises to the cytoplasm. The enzyme catalyses Mo-molybdopterin + GTP + H(+) = Mo-molybdopterin guanine dinucleotide + diphosphate. Its function is as follows. Transfers a GMP moiety from GTP to Mo-molybdopterin (Mo-MPT) cofactor (Moco or molybdenum cofactor) to form Mo-molybdopterin guanine dinucleotide (Mo-MGD) cofactor. The chain is Probable molybdenum cofactor guanylyltransferase from Bacillus anthracis (strain CDC 684 / NRRL 3495).